Reading from the N-terminus, the 203-residue chain is MPKVGMEPVRRKALVDAALRVIGDQGTLAVTMSEIARTAGVSPALAHHYFGSKEQLLIATIRSLLGKLRDDAVAAMKAAATPRERVSALIRVSFRADQFAPETVAAWLAFYSEAQRSEEVRRLLVIYARRLRSNLLVGLRALCPADDAERIAEGAAAMIDGLYIRQSLKSAPISIEASVALTEDYVNAHLRANGDGKYPSPRV.

The HTH tetR-type domain maps to 8–68 (PVRRKALVDA…ATIRSLLGKL (61 aa)). The H-T-H motif DNA-binding region spans 31–50 (TMSEIARTAGVSPALAHHYF).

It participates in amine and polyamine biosynthesis; betaine biosynthesis via choline pathway [regulation]. Repressor involved in the biosynthesis of the osmoprotectant glycine betaine. It represses transcription of the choline transporter BetT and the genes of BetAB involved in the synthesis of glycine betaine. This Rhizobium meliloti (strain 1021) (Ensifer meliloti) protein is HTH-type transcriptional regulator BetI.